The chain runs to 492 residues: Lysine--tRNA ligase (492 aa).

2 residues coordinate Mg(2+): E403 and E410.

It belongs to the class-II aminoacyl-tRNA synthetase family. In terms of assembly, homodimer. Requires Mg(2+) as cofactor.

The protein resides in the cytoplasm. It carries out the reaction tRNA(Lys) + L-lysine + ATP = L-lysyl-tRNA(Lys) + AMP + diphosphate. This Mycoplasmoides gallisepticum (strain R(low / passage 15 / clone 2)) (Mycoplasma gallisepticum) protein is Lysine--tRNA ligase.